The primary structure comprises 265 residues: Sulfur carrier protein FdhD (265 aa).

Cys-107 functions as the Cysteine persulfide intermediate in the catalytic mechanism.

It belongs to the FdhD family.

It localises to the cytoplasm. In terms of biological role, required for formate dehydrogenase (FDH) activity. Acts as a sulfur carrier protein that transfers sulfur from IscS to the molybdenum cofactor prior to its insertion into FDH. This chain is Sulfur carrier protein FdhD, found in Staphylococcus aureus (strain NCTC 8325 / PS 47).